The sequence spans 621 residues: Hemolysin ahh1 (621 aa).

A signal peptide spans Met1–Ala30. The Ricin B-type lectin domain maps to Arg491 to Ser610.

This sequence belongs to the HlyA hemolysin family.

In terms of biological role, bacterial hemolysins are exotoxins that attack blood cell membranes and cause cell rupture by mechanisms not clearly defined. This is Hemolysin ahh1 (ahh1) from Aeromonas hydrophila subsp. hydrophila (strain ATCC 7966 / DSM 30187 / BCRC 13018 / CCUG 14551 / JCM 1027 / KCTC 2358 / NCIMB 9240 / NCTC 8049).